The sequence spans 117 residues: UPF0102 protein YPN_3432 (117 aa).

This sequence belongs to the UPF0102 family.

This Yersinia pestis bv. Antiqua (strain Nepal516) protein is UPF0102 protein YPN_3432.